Consider the following 274-residue polypeptide: 2,3,4,5-tetrahydropyridine-2,6-dicarboxylate N-succinyltransferase (274 aa).

It belongs to the transferase hexapeptide repeat family.

The protein localises to the cytoplasm. It carries out the reaction (S)-2,3,4,5-tetrahydrodipicolinate + succinyl-CoA + H2O = (S)-2-succinylamino-6-oxoheptanedioate + CoA. It functions in the pathway amino-acid biosynthesis; L-lysine biosynthesis via DAP pathway; LL-2,6-diaminopimelate from (S)-tetrahydrodipicolinate (succinylase route): step 1/3. The polypeptide is 2,3,4,5-tetrahydropyridine-2,6-dicarboxylate N-succinyltransferase (Alteromonas mediterranea (strain DSM 17117 / CIP 110805 / LMG 28347 / Deep ecotype)).